The primary structure comprises 142 residues: Large ribosomal subunit protein uL13 (142 aa).

It belongs to the universal ribosomal protein uL13 family. Part of the 50S ribosomal subunit.

In terms of biological role, this protein is one of the early assembly proteins of the 50S ribosomal subunit, although it is not seen to bind rRNA by itself. It is important during the early stages of 50S assembly. The protein is Large ribosomal subunit protein uL13 of Mannheimia succiniciproducens (strain KCTC 0769BP / MBEL55E).